Here is a 166-residue protein sequence, read N- to C-terminus: Interferon gamma (166 aa).

The N-terminal stretch at 1–23 (MNYTSYILAFQLCVILGSSGCYC) is a signal peptide. Glutamine 24 carries the post-translational modification Pyrrolidone carboxylic acid. Residues asparagine 39 and asparagine 106 are each glycosylated (N-linked (GlcNAc...) asparagine). Residues 147–166 (SNLRKRKRRQNQIQGRRASK) form a disordered region.

It belongs to the type II (or gamma) interferon family. Homodimer. Interacts with IFNGR1 (via extracellular domain); this interaction promotes IFNGR1 dimerization. In terms of tissue distribution, released primarily from activated T lymphocytes.

It is found in the secreted. Its function is as follows. Type II interferon produced by immune cells such as T-cells and NK cells that plays crucial roles in antimicrobial, antiviral, and antitumor responses by activating effector immune cells and enhancing antigen presentation. Primarily signals through the JAK-STAT pathway after interaction with its receptor IFNGR1 to affect gene regulation. Upon IFNG binding, IFNGR1 intracellular domain opens out to allow association of downstream signaling components JAK2, JAK1 and STAT1, leading to STAT1 activation, nuclear translocation and transcription of IFNG-regulated genes. Many of the induced genes are transcription factors such as IRF1 that are able to further drive regulation of a next wave of transcription. Plays a role in class I antigen presentation pathway by inducing a replacement of catalytic proteasome subunits with immunoproteasome subunits. In turn, increases the quantity, quality, and repertoire of peptides for class I MHC loading. Increases the efficiency of peptide generation also by inducing the expression of activator PA28 that associates with the proteasome and alters its proteolytic cleavage preference. Up-regulates as well MHC II complexes on the cell surface by promoting expression of several key molecules such as cathepsins B/CTSB, H/CTSH, and L/CTSL. Participates in the regulation of hematopoietic stem cells during development and under homeostatic conditions by affecting their development, quiescence, and differentiation. The chain is Interferon gamma (IFNG) from Lama glama (Llama).